Here is a 454-residue protein sequence, read N- to C-terminus: Tol-Pal system protein TolB (454 aa).

The N-terminal stretch at 1–21 is a signal peptide; sequence MSLRPISLMLALLLTSAPALA.

The protein belongs to the TolB family. In terms of assembly, the Tol-Pal system is composed of five core proteins: the inner membrane proteins TolA, TolQ and TolR, the periplasmic protein TolB and the outer membrane protein Pal. They form a network linking the inner and outer membranes and the peptidoglycan layer.

It is found in the periplasm. Its function is as follows. Part of the Tol-Pal system, which plays a role in outer membrane invagination during cell division and is important for maintaining outer membrane integrity. The polypeptide is Tol-Pal system protein TolB (Sphingopyxis alaskensis (strain DSM 13593 / LMG 18877 / RB2256) (Sphingomonas alaskensis)).